A 78-amino-acid polypeptide reads, in one-letter code: Defensin beta 136 (78 aa).

An N-terminal signal peptide occupies residues 1–21 (MNLCLSALLFFLVILLPSGKG). Intrachain disulfides connect cysteine 33-cysteine 60, cysteine 40-cysteine 54, and cysteine 44-cysteine 61.

The protein belongs to the beta-defensin family.

Its subcellular location is the secreted. Functionally, host defense peptide that exhibits antibacterial and antifungal activity. Exhibits antimicrobial activity against E.coli, S.aureus and C.albicans (in vitro). Has high lipopolysaccharide (LPS)-binding affinity, and may thereby be involved in immunoregulation through LPS neutralization. The polypeptide is Defensin beta 136 (DEFB136) (Homo sapiens (Human)).